Consider the following 551-residue polypeptide: Palmdelphin (551 aa).

Met-1 carries the post-translational modification N-acetylmethionine. Residues 2–106 (EEAELVKERL…LQISTNEEAI (105 aa)) are a coiled coil. Lys-125 participates in a covalent cross-link: Glycyl lysine isopeptide (Lys-Gly) (interchain with G-Cter in SUMO2). Ser-135 carries the post-translational modification Phosphoserine. Lys-179 participates in a covalent cross-link: Glycyl lysine isopeptide (Lys-Gly) (interchain with G-Cter in SUMO1); alternate. Residue Lys-179 forms a Glycyl lysine isopeptide (Lys-Gly) (interchain with G-Cter in SUMO2); alternate linkage. Basic and acidic residues predominate over residues 247 to 259 (SERNSKSPTEYHD). 2 disordered regions span residues 247 to 393 (SERN…EDEE) and 450 to 529 (EEEE…IAGD). Thr-271 is modified (phosphothreonine). 4 positions are modified to phosphoserine: Ser-321, Ser-370, Ser-384, and Ser-385. A compositionally biased stretch (basic and acidic residues) spans 484–495 (KRAEVNPHENTN). Phosphoserine is present on residues Ser-498, Ser-515, and Ser-520.

It belongs to the paralemmin family. Interacts with GLUL. Cell projection, dendrite. Cell projection, dendritic spine. Phosphorylated.

It is found in the cytoplasm. It localises to the cell projection. The protein resides in the dendrite. The protein localises to the dendritic spine. In Sus scrofa (Pig), this protein is Palmdelphin (PALMD).